We begin with the raw amino-acid sequence, 196 residues long: RNA pyrophosphohydrolase (196 aa).

The Nudix hydrolase domain maps to 6 to 149 (GYRPNVGIVI…KRDVYRKVMK (144 aa)). The short motif at 38-59 (GGINDNESAEQAMYRELHEEVG) is the Nudix box element. The segment at 166 to 196 (SREANSQSNSANKKYSQTKYTKRHFYKSKGQ) is disordered. The span at 167–184 (REANSQSNSANKKYSQTK) shows a compositional bias: polar residues. A compositionally biased stretch (basic residues) spans 185–196 (YTKRHFYKSKGQ).

It belongs to the Nudix hydrolase family. RppH subfamily. A divalent metal cation is required as a cofactor.

Functionally, accelerates the degradation of transcripts by removing pyrophosphate from the 5'-end of triphosphorylated RNA, leading to a more labile monophosphorylated state that can stimulate subsequent ribonuclease cleavage. The sequence is that of RNA pyrophosphohydrolase from Haemophilus influenzae (strain 86-028NP).